A 288-amino-acid chain; its full sequence is ATP synthase gamma chain (288 aa).

It belongs to the ATPase gamma chain family. In terms of assembly, F-type ATPases have 2 components, CF(1) - the catalytic core - and CF(0) - the membrane proton channel. CF(1) has five subunits: alpha(3), beta(3), gamma(1), delta(1), epsilon(1). CF(0) has three main subunits: a, b and c.

It is found in the cell inner membrane. Produces ATP from ADP in the presence of a proton gradient across the membrane. The gamma chain is believed to be important in regulating ATPase activity and the flow of protons through the CF(0) complex. The polypeptide is ATP synthase gamma chain (Aliivibrio fischeri (strain ATCC 700601 / ES114) (Vibrio fischeri)).